The chain runs to 280 residues: DegV domain-containing protein spyM18_1709 (280 aa).

In terms of domain architecture, DegV spans 3–280; sequence WKIVTDSGCD…DGGLLMGYEI (278 aa). S63 and S91 together coordinate hexadecanoate.

Its function is as follows. May bind long-chain fatty acids, such as palmitate, and may play a role in lipid transport or fatty acid metabolism. This chain is DegV domain-containing protein spyM18_1709, found in Streptococcus pyogenes serotype M18 (strain MGAS8232).